The chain runs to 254 residues: Aspartate/glutamate leucyltransferase (254 aa).

Belongs to the R-transferase family. Bpt subfamily.

The protein localises to the cytoplasm. It catalyses the reaction N-terminal L-glutamyl-[protein] + L-leucyl-tRNA(Leu) = N-terminal L-leucyl-L-glutamyl-[protein] + tRNA(Leu) + H(+). The catalysed reaction is N-terminal L-aspartyl-[protein] + L-leucyl-tRNA(Leu) = N-terminal L-leucyl-L-aspartyl-[protein] + tRNA(Leu) + H(+). Functionally, functions in the N-end rule pathway of protein degradation where it conjugates Leu from its aminoacyl-tRNA to the N-termini of proteins containing an N-terminal aspartate or glutamate. This is Aspartate/glutamate leucyltransferase from Maricaulis maris (strain MCS10) (Caulobacter maris).